We begin with the raw amino-acid sequence, 298 residues long: 1,2-dihydroxynaphthalene dioxygenase (298 aa).

VOC domains lie at 6–121 and 146–267; these read ELGY…IFYG and GIGH…FGWG. H149 lines the Fe cation pocket. Substrate is bound by residues H149, 196–197, H212, and Y253; that span reads QH. H212 provides a ligand contact to Fe cation. Fe cation is bound at residue E263.

This sequence belongs to the extradiol ring-cleavage dioxygenase family. In terms of assembly, homooctamer. Requires Fe(2+) as cofactor.

It catalyses the reaction naphthalene-1,2-diol + O2 = 2-hydroxychromene-2-carboxylate + H(+). The protein operates within aromatic compound metabolism; naphthalene degradation. Its function is as follows. Involved in the naphthalene and naphthalenesulfonate catabolic pathway. Catalyzes the meta-cleavage of 1,2-dihydroxynaphthalene (1,2-DHN) to yield 2-hydroxychromene-2-carboxylic acid. Can also cleave 1,2,5-trihydroxynaphthalene (1,2,5-THN), 1,2,6-trihydroxynaphthalene (1,2,6-THN), 1,2,7-trihydroxynaphthalene (1,2,7-THN), 2,3-dihydroxybiphenyl, 3,4-dihydroxybiphenyl, catechol, 3-methylcatechol and 4-methylcatechol. The polypeptide is 1,2-dihydroxynaphthalene dioxygenase (nsaC) (Sphingobium xenophagum).